The chain runs to 314 residues: Acetaldehyde dehydrogenase 1 (314 aa).

16–19 (SGNI) contacts NAD(+). The Acyl-thioester intermediate role is filled by Cys134. NAD(+)-binding positions include 165-173 (SAGPGTRAN) and Asn292.

The protein belongs to the acetaldehyde dehydrogenase family.

It carries out the reaction acetaldehyde + NAD(+) + CoA = acetyl-CoA + NADH + H(+). The protein is Acetaldehyde dehydrogenase 1 (mhpF) of Cupriavidus necator (strain ATCC 17699 / DSM 428 / KCTC 22496 / NCIMB 10442 / H16 / Stanier 337) (Ralstonia eutropha).